Reading from the N-terminus, the 274-residue chain is Tyrosinase (274 aa).

The Cu cation site is built by His38, His54, His63, His190, His194, and His216.

Belongs to the tyrosinase family. The cofactor is Cu(2+).

It carries out the reaction 2 L-dopa + O2 = 2 L-dopaquinone + 2 H2O. The catalysed reaction is L-tyrosine + O2 = L-dopaquinone + H2O. This is a copper-containing oxidase that functions in the formation of pigments such as melanins and other polyphenolic compounds. This chain is Tyrosinase (melC2), found in Streptomyces glaucescens.